Reading from the N-terminus, the 74-residue chain is Antimicrobial peptide 36.4 (74 aa).

Residues Met1–Ala22 form the signal peptide. At Lys39 the chain carries Lysine amide. Positions Leu44–Tyr74 are excised as a propeptide.

Belongs to the non-disulfide-bridged peptide (NDBP) superfamily. Short antimicrobial peptide (group 4) family. In terms of tissue distribution, expressed by the venom gland.

Its subcellular location is the secreted. It is found in the target cell membrane. Its function is as follows. Cationic host defense peptide that have antibacterial activity by breaking membranes. Is more effective on Gram-positive than on Gram-negative bacteria. The chain is Antimicrobial peptide 36.4 from Lychas mucronatus (Chinese swimming scorpion).